The primary structure comprises 320 residues: O(6)-methylguanine-induced apoptosis 2 (320 aa).

Positions 46-91 (LNESPGPGSYLSHSPAEGCSPSFSKRGTGSFASKGGRVPRSFQRLS) are disordered. STPGR repeat units follow at residues 49–82 (SPGP…KGGR), 91–103 (SPGP…QMSL), 132–163 (NPAP…KTRR), 173–192 (GPSP…SPQA), 213–233 (PGPG…TVLP), 254–266 (PGPG…NYNR), and 294–305 (PGPGFYEPTVLS). A compositionally biased stretch (polar residues) spans 66-76 (PSFSKRGTGSF). The segment at 207-226 (PVRNNIPGPGTYNPHQPPEP) is disordered.

It belongs to the STPG1 family.

The protein localises to the cytoplasm. The protein resides in the nucleus. May positively contribute to the induction of apoptosis triggered by O(6)-methylguanine. This Danio rerio (Zebrafish) protein is O(6)-methylguanine-induced apoptosis 2 (stpg1).